The chain runs to 493 residues: Ribose import ATP-binding protein RbsA (493 aa).

ABC transporter domains follow at residues 5–241 (LKIS…VGRR) and 252–491 (EKGE…AAAI). 37–44 (GENGAGKS) provides a ligand contact to ATP.

This sequence belongs to the ABC transporter superfamily. Ribose importer (TC 3.A.1.2.1) family. The complex is composed of an ATP-binding protein (RbsA), two transmembrane proteins (RbsC) and a solute-binding protein (RbsB).

The protein resides in the cell inner membrane. It catalyses the reaction D-ribose(out) + ATP + H2O = D-ribose(in) + ADP + phosphate + H(+). Functionally, part of the ABC transporter complex RbsABC involved in ribose import. Responsible for energy coupling to the transport system. In Haemophilus influenzae (strain 86-028NP), this protein is Ribose import ATP-binding protein RbsA.